We begin with the raw amino-acid sequence, 478 residues long: Zinc finger C3HC-type protein 1-like (478 aa).

The segment at 93–147 (CAKYGWSNIECDMLKCSSCNAYLCASLQPVLDFSKYKQRCVELQEALRKAHEKFC) adopts a C3HC-type zinc-finger fold. Positions 285 to 389 (LSAPNTPVSP…SSSSDTSPRG (105 aa)) are disordered. The segment covering 351 to 363 (SMGQGESSGLSNE) has biased composition (polar residues). Positions 377 to 388 (LCSSSSSDTSPR) are enriched in low complexity.

In terms of processing, phosphorylated. May also be weakly phosphorylated on Tyr residues.

The protein resides in the nucleus. It localises to the nucleus envelope. Functionally, required for proper positioning of a substantial amount of TPR at the nuclear basket (NB) through interaction with TPR. The polypeptide is Zinc finger C3HC-type protein 1-like (zc3hc1) (Xenopus tropicalis (Western clawed frog)).